The chain runs to 39 residues: Gas vesicle protein C (39 aa).

Belongs to the gas vesicle GvpC family.

It localises to the gas vesicle. In terms of biological role, confers stability, involved in shaping gas vesicles, hollow, gas filled proteinaceous nanostructures. During planktonic growth they allow positioning of the organism at a favorable depth for light or nutrient acquisition. The chain is Gas vesicle protein C from Spirulina sp. (strain CCAP 1475/10).